The sequence spans 318 residues: tRNA-cytidine(32) 2-sulfurtransferase (318 aa).

The short motif at 52–57 is the PP-loop motif element; sequence SGGKDS. Residues C127, C130, and C218 each coordinate [4Fe-4S] cluster.

It belongs to the TtcA family. As to quaternary structure, homodimer. Mg(2+) serves as cofactor. Requires [4Fe-4S] cluster as cofactor.

It localises to the cytoplasm. The catalysed reaction is cytidine(32) in tRNA + S-sulfanyl-L-cysteinyl-[cysteine desulfurase] + AH2 + ATP = 2-thiocytidine(32) in tRNA + L-cysteinyl-[cysteine desulfurase] + A + AMP + diphosphate + H(+). Its pathway is tRNA modification. Catalyzes the ATP-dependent 2-thiolation of cytidine in position 32 of tRNA, to form 2-thiocytidine (s(2)C32). The sulfur atoms are provided by the cysteine/cysteine desulfurase (IscS) system. The protein is tRNA-cytidine(32) 2-sulfurtransferase of Actinobacillus pleuropneumoniae serotype 5b (strain L20).